The following is a 226-amino-acid chain: Putative ABC transporter ATP-binding protein BQ02700 (226 aa).

Residues 4–225 (IKFDKVTQVF…VAIKEYIRRM (222 aa)) form the ABC transporter domain. ATP is bound at residue 35-42 (GANGSGKS).

Belongs to the ABC transporter superfamily.

It is found in the cell inner membrane. In terms of biological role, probably part of an ABC transporter complex. Responsible for energy coupling to the transport system. The chain is Putative ABC transporter ATP-binding protein BQ02700 from Bartonella quintana (strain Toulouse) (Rochalimaea quintana).